Consider the following 401-residue polypeptide: Acetate kinase (401 aa).

Residue Asn7 coordinates Mg(2+). Lys14 lines the ATP pocket. Position 96 (Arg96) interacts with substrate. The active-site Proton donor/acceptor is Asp153. Residues 212–216 (HLGNG), 287–289 (DMR), and 335–339 (GIGEN) contribute to the ATP site. Residue Glu388 participates in Mg(2+) binding.

Belongs to the acetokinase family. Homodimer. Mg(2+) serves as cofactor. Mn(2+) is required as a cofactor.

Its subcellular location is the cytoplasm. It catalyses the reaction acetate + ATP = acetyl phosphate + ADP. Its pathway is metabolic intermediate biosynthesis; acetyl-CoA biosynthesis; acetyl-CoA from acetate: step 1/2. Functionally, catalyzes the formation of acetyl phosphate from acetate and ATP. Can also catalyze the reverse reaction. The protein is Acetate kinase of Microcystis aeruginosa (strain NIES-843 / IAM M-2473).